The following is a 477-amino-acid chain: Exodeoxyribonuclease 7 large subunit (477 aa).

The tract at residues 452-477 is disordered; sequence KAAAAPKRVKKSPPPGTSGAQEDLFG.

The protein belongs to the XseA family. Heterooligomer composed of large and small subunits.

It localises to the cytoplasm. It catalyses the reaction Exonucleolytic cleavage in either 5'- to 3'- or 3'- to 5'-direction to yield nucleoside 5'-phosphates.. In terms of biological role, bidirectionally degrades single-stranded DNA into large acid-insoluble oligonucleotides, which are then degraded further into small acid-soluble oligonucleotides. The sequence is that of Exodeoxyribonuclease 7 large subunit from Erythrobacter litoralis (strain HTCC2594).